Consider the following 149-residue polypeptide: MFNKILVVCVGNVCRSPTAERLLKRFHPSLTVASAGLGALVGKGADPAAASVASAHDLSLENHCARQISARLCREYDLILTMEKRHIAALCDIAPEMRSKVMLFGHWDSEREIPDPYRKSRDAFEAVYTLLERSARQWAQALNAEQGKP.

Cys-9 functions as the Nucleophile in the catalytic mechanism. Arg-15 is an active-site residue. Asp-115 (proton donor) is an active-site residue.

This sequence belongs to the low molecular weight phosphotyrosine protein phosphatase family.

The catalysed reaction is O-phospho-L-tyrosyl-[protein] + H2O = L-tyrosyl-[protein] + phosphate. It functions in the pathway glycan metabolism; exopolysaccharide biosynthesis. Its function is as follows. Dephosphorylates Wzc. Required for the extracellular polysaccharide colanic acid synthesis. Probably involved in the export of colanic acid from the cell to medium. Involved in protection of cells against contact-dependent growth inhibition (CDI). The polypeptide is Low molecular weight protein-tyrosine-phosphatase Wzb (wzb) (Salmonella typhi).